The chain runs to 462 residues: Receptor like protein 29 (462 aa).

The N-terminal stretch at 1–26 (MTMKRALPSPSSLLFFFLLITPLFLC) is a signal peptide. The Extracellular segment spans residues 27 to 441 (QENRVSASMP…SQASRYYRSC (415 aa)). Asn-139 carries an N-linked (GlcNAc...) asparagine glycan. LRR repeat units follow at residues 139–164 (NSSL…ISSL), 165–188 (KSLQ…IFSL), 190–212 (SLVH…LGNL), 213–236 (NNLV…ISQL), 238–260 (MLQK…VEKL), 261–284 (RSLS…ISNL), 286–308 (SLQY…LGFL), 309–331 (PKLQ…SYTK), 332–355 (LTNL…GFES), and 357–381 (PHVF…SFLR). 3 N-linked (GlcNAc...) asparagine glycosylation sites follow: Asn-334, Asn-363, and Asn-416. A helical membrane pass occupies residues 442 to 462 (FFANALFPFALFLGLHQRWVL).

The protein belongs to the RLP family.

Its subcellular location is the cell membrane. The protein is Receptor like protein 29 of Arabidopsis thaliana (Mouse-ear cress).